The sequence spans 433 residues: Small ribosomal subunit biogenesis GTPase RsgA 1, mitochondrial (433 aa).

A disordered region spans residues 1 to 20 (MLRAKHIGKNYSSSLSPVLS). The region spanning 113-291 (SEILDPPVAN…LADTPGFNQP (179 aa)) is the CP-type G domain. 212–220 (GPSGVGKSS) lines the GTP pocket. C317, C322, H324, and C330 together coordinate Zn(2+).

It belongs to the TRAFAC class YlqF/YawG GTPase family. RsgA subfamily. In terms of assembly, monomer. Associates with 30S ribosomal subunit, binds 16S rRNA. Zn(2+) is required as a cofactor.

The protein resides in the mitochondrion. Its function is as follows. One of several proteins that assist in the late maturation steps of the functional core of the 30S ribosomal subunit. Helps release RbfA from mature subunits. May play a role in the assembly of ribosomal proteins into the subunit. Circularly permuted GTPase that catalyzes slow GTP hydrolysis, GTPase activity is stimulated by the 30S ribosomal subunit. Required for embryo development. The protein is Small ribosomal subunit biogenesis GTPase RsgA 1, mitochondrial of Arabidopsis thaliana (Mouse-ear cress).